Reading from the N-terminus, the 101-residue chain is Urease subunit beta (101 aa).

Belongs to the urease beta subunit family. Heterotrimer of UreA (gamma), UreB (beta) and UreC (alpha) subunits. Three heterotrimers associate to form the active enzyme.

The protein resides in the cytoplasm. It catalyses the reaction urea + 2 H2O + H(+) = hydrogencarbonate + 2 NH4(+). It functions in the pathway nitrogen metabolism; urea degradation; CO(2) and NH(3) from urea (urease route): step 1/1. The protein is Urease subunit beta of Rhizobium johnstonii (strain DSM 114642 / LMG 32736 / 3841) (Rhizobium leguminosarum bv. viciae).